We begin with the raw amino-acid sequence, 282 residues long: 4-diphosphocytidyl-2-C-methyl-D-erythritol kinase (282 aa).

The active site involves Lys-8. An ATP-binding site is contributed by 91-101 (PVAAGLAGGST). The active site involves Asp-133.

It belongs to the GHMP kinase family. IspE subfamily.

The enzyme catalyses 4-CDP-2-C-methyl-D-erythritol + ATP = 4-CDP-2-C-methyl-D-erythritol 2-phosphate + ADP + H(+). It functions in the pathway isoprenoid biosynthesis; isopentenyl diphosphate biosynthesis via DXP pathway; isopentenyl diphosphate from 1-deoxy-D-xylulose 5-phosphate: step 3/6. Functionally, catalyzes the phosphorylation of the position 2 hydroxy group of 4-diphosphocytidyl-2C-methyl-D-erythritol. This Symbiobacterium thermophilum (strain DSM 24528 / JCM 14929 / IAM 14863 / T) protein is 4-diphosphocytidyl-2-C-methyl-D-erythritol kinase.